Consider the following 144-residue polypeptide: Maximins 10/H3 (144 aa).

The signal sequence occupies residues 1-18 (MNFKYIVAVSFLIASAYA). The propeptide occupies 19–43 (RSVKNDEQSLSQRDVLDEESLREFR). Serine 70 bears the Serine amide mark. Residues 74 to 123 (TAEDHEVMKRLEAVMRDLDSLDYPEEATERETRGFNQEEIANLFTKKEKR) constitute a propeptide that is removed on maturation. Position 143 is an isoleucine amide (isoleucine 143).

It belongs to the bombinin family. Expressed by the skin glands.

It is found in the secreted. In terms of biological role, maximin-10 shows antimicrobial activity against bacteria and against the fungus C.albicans. It has little hemolytic activity. Maximin-H3 shows antibacterial activity against both Gram-positive and Gram-negative bacteria. It also shows antimicrobial activity against the fungus C.albicans. Shows strong hemolytic activity. In Bombina maxima (Giant fire-bellied toad), this protein is Maximins 10/H3.